Reading from the N-terminus, the 229-residue chain is Peroxiredoxin-like 2A (229 aa).

The tract at residues 14 to 112 (MWSIGVGAFG…DELGVPLYAV (99 aa)) is thioredoxin fold. Catalysis depends on redox-active residues Cys-85 and Cys-88.

This sequence belongs to the peroxiredoxin-like PRXL2 family. PRXL2A subfamily. In terms of tissue distribution, expressed by the principal cells of the epididymis. Detected in the head region of epididymal sperm (at protein level). Expressed in bone marrow.

The protein resides in the cytoplasm. It localises to the secreted. Its function is as follows. Involved in redox regulation of the cell. Acts as an antioxidant. Inhibits TNFSF11-induced NFKB1 and JUN activation and osteoclast differentiation. May affect bone resorption and help to maintain bone mass. Acts as a negative regulator of macrophage-mediated inflammation by inhibiting macrophage production of inflammatory cytokines, probably through suppression of the MAPK signaling pathway. The polypeptide is Peroxiredoxin-like 2A (Rattus norvegicus (Rat)).